The chain runs to 571 residues: Acetolactate synthase large subunit (571 aa).

Glu51 contributes to the thiamine diphosphate binding site. FAD contacts are provided by residues Arg153, 261-282, and 304-323; these read HGTY…IGVR and DIDP…IVGD. The segment at 394–474 is thiamine pyrophosphate binding; the sequence is QHQMFTALYY…VLILNLNNSS (81 aa). Residues Asp445 and Asn472 each coordinate Mg(2+).

This sequence belongs to the TPP enzyme family. As to quaternary structure, dimer of large and small chains. It depends on Mg(2+) as a cofactor. Thiamine diphosphate serves as cofactor.

The catalysed reaction is 2 pyruvate + H(+) = (2S)-2-acetolactate + CO2. Its pathway is amino-acid biosynthesis; L-isoleucine biosynthesis; L-isoleucine from 2-oxobutanoate: step 1/4. It participates in amino-acid biosynthesis; L-valine biosynthesis; L-valine from pyruvate: step 1/4. The chain is Acetolactate synthase large subunit (ilvI) from Buchnera aphidicola subsp. Acyrthosiphon pisum (strain APS) (Acyrthosiphon pisum symbiotic bacterium).